We begin with the raw amino-acid sequence, 240 residues long: ATP-dependent dethiobiotin synthetase BioD (240 aa).

13-18 (GVGKTI) contributes to the ATP binding site. A Mg(2+)-binding site is contributed by Thr-17. Residue Lys-38 is part of the active site. Thr-42 contributes to the substrate binding site. ATP is bound by residues Asp-55, 116 to 119 (EGVG), and 214 to 216 (PYL). Residues Asp-55 and Glu-116 each coordinate Mg(2+).

This sequence belongs to the dethiobiotin synthetase family. As to quaternary structure, homodimer. Mg(2+) serves as cofactor.

It is found in the cytoplasm. The catalysed reaction is (7R,8S)-7,8-diammoniononanoate + CO2 + ATP = (4R,5S)-dethiobiotin + ADP + phosphate + 3 H(+). The protein operates within cofactor biosynthesis; biotin biosynthesis; biotin from 7,8-diaminononanoate: step 1/2. Catalyzes a mechanistically unusual reaction, the ATP-dependent insertion of CO2 between the N7 and N8 nitrogen atoms of 7,8-diaminopelargonic acid (DAPA, also called 7,8-diammoniononanoate) to form a ureido ring. The polypeptide is ATP-dependent dethiobiotin synthetase BioD (Thermodesulfovibrio yellowstonii (strain ATCC 51303 / DSM 11347 / YP87)).